A 239-amino-acid polypeptide reads, in one-letter code: Putative ABC transporter ATP-binding protein BR1368/BS1330_I1363 (239 aa).

Positions 5–234 (LSLDRVSVSR…EQVHLHYVEA (230 aa)) constitute an ABC transporter domain. Position 37-44 (37-44 (GDNGVGKT)) interacts with ATP.

The protein belongs to the ABC transporter superfamily.

The protein resides in the cell inner membrane. Functionally, probably part of an ABC transporter complex. Responsible for energy coupling to the transport system. In Brucella suis biovar 1 (strain 1330), this protein is Putative ABC transporter ATP-binding protein BR1368/BS1330_I1363.